Here is a 358-residue protein sequence, read N- to C-terminus: Protein ocs (358 aa).

Belongs to the lysopine/nopaline/octopine/opine/vitopine dehydrogenases family.

The catalysed reaction is D-octopine + NAD(+) + H2O = L-arginine + pyruvate + NADH + H(+). The enzyme catalyses D-lysopine + NADP(+) + H2O = L-lysine + pyruvate + NADPH + H(+). Functionally, reductive condensation of pyruvate and arginine, lysine, histidine, or octopine to form octopine, lysopine, histopine, or octopinic acid, respectively. NADPH is the preferred cofactor, but NADH can also be used. The chain is Protein ocs (ocs) from Agrobacterium vitis (Rhizobium vitis).